Reading from the N-terminus, the 361-residue chain is Histidinol-phosphate aminotransferase (361 aa).

The residue at position 219 (Lys-219) is an N6-(pyridoxal phosphate)lysine.

This sequence belongs to the class-II pyridoxal-phosphate-dependent aminotransferase family. Histidinol-phosphate aminotransferase subfamily. Homodimer. Pyridoxal 5'-phosphate is required as a cofactor.

It catalyses the reaction L-histidinol phosphate + 2-oxoglutarate = 3-(imidazol-4-yl)-2-oxopropyl phosphate + L-glutamate. Its pathway is amino-acid biosynthesis; L-histidine biosynthesis; L-histidine from 5-phospho-alpha-D-ribose 1-diphosphate: step 7/9. This is Histidinol-phosphate aminotransferase from Cereibacter sphaeroides (strain ATCC 17023 / DSM 158 / JCM 6121 / CCUG 31486 / LMG 2827 / NBRC 12203 / NCIMB 8253 / ATH 2.4.1.) (Rhodobacter sphaeroides).